Here is a 281-residue protein sequence, read N- to C-terminus: Diaminopimelate epimerase (281 aa).

Substrate contacts are provided by N14 and N65. C74 serves as the catalytic Proton donor. Residues 75 to 76 (GN), N165, N198, and 216 to 217 (ER) each bind substrate. The active-site Proton acceptor is the C225. Substrate is bound at residue 226–227 (GT).

This sequence belongs to the diaminopimelate epimerase family. Homodimer.

The protein resides in the cytoplasm. The catalysed reaction is (2S,6S)-2,6-diaminopimelate = meso-2,6-diaminopimelate. The protein operates within amino-acid biosynthesis; L-lysine biosynthesis via DAP pathway; DL-2,6-diaminopimelate from LL-2,6-diaminopimelate: step 1/1. Its function is as follows. Catalyzes the stereoinversion of LL-2,6-diaminopimelate (L,L-DAP) to meso-diaminopimelate (meso-DAP), a precursor of L-lysine and an essential component of the bacterial peptidoglycan. The chain is Diaminopimelate epimerase from Leptospira interrogans serogroup Icterohaemorrhagiae serovar copenhageni (strain Fiocruz L1-130).